Reading from the N-terminus, the 91-residue chain is HssA/B-like protein 52 (91 aa).

Disordered stretches follow at residues 1 to 20 (MTLFSSISSISNPMTSSKSS) and 72 to 91 (GGCGGSNGSMGGGNGSCCGI).

The protein belongs to the hssA/B family.

The chain is HssA/B-like protein 52 (hssl52) from Dictyostelium discoideum (Social amoeba).